A 469-amino-acid polypeptide reads, in one-letter code: UDP-N-acetylmuramate--L-alanine ligase (469 aa).

113–119 lines the ATP pocket; that stretch reads GTHGKTT.

It belongs to the MurCDEF family.

It is found in the cytoplasm. It carries out the reaction UDP-N-acetyl-alpha-D-muramate + L-alanine + ATP = UDP-N-acetyl-alpha-D-muramoyl-L-alanine + ADP + phosphate + H(+). It functions in the pathway cell wall biogenesis; peptidoglycan biosynthesis. Cell wall formation. The sequence is that of UDP-N-acetylmuramate--L-alanine ligase from Neisseria gonorrhoeae (strain ATCC 700825 / FA 1090).